The following is a 151-amino-acid chain: Cytochrome c-type biogenesis protein CcmE (151 aa).

At 1-8 the chain is on the cytoplasmic side; sequence MNPLRRKR. Residues 9–29 traverse the membrane as a helical; Signal-anchor for type II membrane protein segment; the sequence is LLIILAILVGVGVAVGLALSA. Residues 30-151 are Periplasmic-facing; sequence LQQNINLFYT…QSAPTPAKEG (122 aa). The heme site is built by His-124 and Tyr-128.

The protein belongs to the CcmE/CycJ family.

Its subcellular location is the cell inner membrane. Functionally, heme chaperone required for the biogenesis of c-type cytochromes. Transiently binds heme delivered by CcmC and transfers the heme to apo-cytochromes in a process facilitated by CcmF and CcmH. The sequence is that of Cytochrome c-type biogenesis protein CcmE from Pseudomonas fluorescens biotype C.